An 88-amino-acid polypeptide reads, in one-letter code: Fe-S protein maturation auxiliary factor SufT (88 aa).

It belongs to the MIP18 family.

Involved in the maturation of iron-sulfur (Fe-S) proteins. May function as a Fe-S cluster carrier. Is required for S.aureus growth under conditions that impose a high demand for lipoic acid, likely via a role in the maturation of the lipoate synthase LipA. Is non-essential for growth in conditions that impose a low demand for lipoic acid or Fe-S clusters, such as fermentative growth. Also seems to be involved in the maturation of AcnA, LeuCD and IlvD proteins, that utilize Fe-S cluster cofactors, and its role increases under conditions of high-demand for Fe-S clusters (respiratory growth). Is not involved in the repair of Fe-S clusters damaged by reactive oxygen species or in the physical protection of Fe-S clusters from oxidants. Displays synergy with the Fe-S cluster carrier Nfu. This is Fe-S protein maturation auxiliary factor SufT from Staphylococcus aureus (strain USA300).